The sequence spans 448 residues: Methylenetetrahydrofolate--tRNA-(uracil-5-)-methyltransferase TrmFO (448 aa).

13-18 (GAGLAG) provides a ligand contact to FAD.

The protein belongs to the MnmG family. TrmFO subfamily. It depends on FAD as a cofactor.

It localises to the cytoplasm. The enzyme catalyses uridine(54) in tRNA + (6R)-5,10-methylene-5,6,7,8-tetrahydrofolate + NADH + H(+) = 5-methyluridine(54) in tRNA + (6S)-5,6,7,8-tetrahydrofolate + NAD(+). It catalyses the reaction uridine(54) in tRNA + (6R)-5,10-methylene-5,6,7,8-tetrahydrofolate + NADPH + H(+) = 5-methyluridine(54) in tRNA + (6S)-5,6,7,8-tetrahydrofolate + NADP(+). Its function is as follows. Catalyzes the folate-dependent formation of 5-methyl-uridine at position 54 (M-5-U54) in all tRNAs. The chain is Methylenetetrahydrofolate--tRNA-(uracil-5-)-methyltransferase TrmFO from Streptococcus pyogenes serotype M5 (strain Manfredo).